A 308-amino-acid chain; its full sequence is Probable acetylxylan esterase A (308 aa).

The N-terminal stretch at 1–19 (MAPFSFLLTLLLYTLSAGA) is a signal peptide. N-linked (GlcNAc...) asparagine glycosylation occurs at asparagine 141. The active-site Charge relay system is serine 151. A glycan (N-linked (GlcNAc...) asparagine) is linked at asparagine 193.

This sequence belongs to the carbohydrate esterase 1 (CE1) family. AxeA subfamily. Monomer.

It is found in the secreted. It carries out the reaction Deacetylation of xylans and xylo-oligosaccharides.. The protein operates within glycan degradation; xylan degradation. Acetylxylan esterase involved in the hydrolysis of xylan, a major structural heterogeneous polysaccharide found in plant biomass representing the second most abundant polysaccharide in the biosphere, after cellulose. Degrades acetylated xylans by cleaving acetyl side groups from the hetero-xylan backbone. The sequence is that of Probable acetylxylan esterase A (axeA) from Aspergillus clavatus (strain ATCC 1007 / CBS 513.65 / DSM 816 / NCTC 3887 / NRRL 1 / QM 1276 / 107).